Consider the following 196-residue polypeptide: ATP-dependent Clp protease proteolytic subunit (196 aa).

Serine 99 functions as the Nucleophile in the catalytic mechanism. Residue histidine 124 is part of the active site.

Belongs to the peptidase S14 family. Fourteen ClpP subunits assemble into 2 heptameric rings which stack back to back to give a disk-like structure with a central cavity, resembling the structure of eukaryotic proteasomes.

The protein resides in the cytoplasm. The catalysed reaction is Hydrolysis of proteins to small peptides in the presence of ATP and magnesium. alpha-casein is the usual test substrate. In the absence of ATP, only oligopeptides shorter than five residues are hydrolyzed (such as succinyl-Leu-Tyr-|-NHMec, and Leu-Tyr-Leu-|-Tyr-Trp, in which cleavage of the -Tyr-|-Leu- and -Tyr-|-Trp bonds also occurs).. Its function is as follows. Cleaves peptides in various proteins in a process that requires ATP hydrolysis. Has a chymotrypsin-like activity. Plays a major role in the degradation of misfolded proteins. The protein is ATP-dependent Clp protease proteolytic subunit of Helicobacter hepaticus (strain ATCC 51449 / 3B1).